Reading from the N-terminus, the 73-residue chain is SIFamide-related peptide (73 aa).

The N-terminal stretch at 1 to 23 (MVSIRLTFALAIVAIIFAFSVDA) is a signal peptide. Position 35 is a phenylalanine amide (F35). Positions 39 to 73 (SNTMTDYEFTSRALSAICEVASETCTAWMSRQESN) are excised as a propeptide.

As to expression, expressed in brain, the retrocerebral complex and in ventral, thoracic and abdominal ganglia (at protein level).

The protein localises to the secreted. This is SIFamide-related peptide from Camponotus floridanus (Florida carpenter ant).